Consider the following 373-residue polypeptide: tRNA (guanine(26)-N(2))-dimethyltransferase (373 aa).

A Trm1 methyltransferase domain is found at 2–365 (KIISEGETKL…AELSDLVVLI (364 aa)). R35, R66, D86, D113, and A114 together coordinate S-adenosyl-L-methionine.

It belongs to the class I-like SAM-binding methyltransferase superfamily. Trm1 family.

It catalyses the reaction guanosine(26) in tRNA + 2 S-adenosyl-L-methionine = N(2)-dimethylguanosine(26) in tRNA + 2 S-adenosyl-L-homocysteine + 2 H(+). Functionally, dimethylates a single guanine residue at position 26 of a number of tRNAs using S-adenosyl-L-methionine as donor of the methyl groups. This Methanococcus maripaludis (strain C5 / ATCC BAA-1333) protein is tRNA (guanine(26)-N(2))-dimethyltransferase.